The sequence spans 377 residues: Pseudouridylate synthase RPUSD4, mitochondrial (377 aa).

The N-terminal 35 residues, 1–35 (MAAPLLGSPGLQVLSMSSRTGKLFTPSSRSFCSRA), are a transit peptide targeting the mitochondrion. The active site involves aspartate 153.

It belongs to the pseudouridine synthase RluA family. In terms of assembly, interacts with 16S mt-rRNA, mt-tRNA(Phe) and mt-tRNA(Met). Forms a regulatory protein-RNA complex, consisting of RCC1L, NGRN, RPUSD3, RPUSD4, TRUB2, FASTKD2 and 16S mt-rRNA.

It is found in the mitochondrion matrix. It localises to the nucleus. The protein localises to the cytoplasm. It carries out the reaction uridine in 5S rRNA = pseudouridine in 5S rRNA. It catalyses the reaction a uridine in tRNA = a pseudouridine in tRNA. The enzyme catalyses a uridine in mRNA = a pseudouridine in mRNA. Its function is as follows. Catalyzes uridine to pseudouridine isomerization (pseudouridylation) of different mitochondrial RNA substrates. Acts on position 1397 in 16S mitochondrial ribosomal RNA (16S mt-rRNA). This modification is required for the assembly of 16S mt-rRNA into a functional mitochondrial ribosome. As a component of a functional protein-RNA module, consisting of RCC1L, NGRN, RPUSD3, RPUSD4, TRUB2, FASTKD2 and 16S mt-rRNA, controls 16S mt-rRNA abundance and is required for intra-mitochondrial translation. Acts on position 39 in mitochondrial tRNA(Phe). Also catalyzes pseudouridylation of mRNAs in nucleus: acts as a regulator of pre-mRNA splicing by mediating pseudouridylation of pre-mRNAs at locations associated with alternatively spliced regions. Pseudouridylation of pre-mRNAs near splice sites directly regulates mRNA splicing and mRNA 3'-end processing. The protein is Pseudouridylate synthase RPUSD4, mitochondrial of Rattus norvegicus (Rat).